The primary structure comprises 407 residues: MIPNPLEELTLEQLRSQRTSMKWRAHPADVLPLWVAEMDVKLPPTVADALRRAIDDGDTGYPYGTEYAEAVREFACQRWQWHDLEVSRTAIVPDVMLGIVEVLRLITDRGDPVIVNSPVYAPFYAFVSHDGRRVIPAPLRGDGRIDLDALQEAFSSARASSGSSGNVAYLLCNPHNPTGSVHTADELRGIAERAQRFGVRVVSDEIHAPLIPSGARFTPYLSVPGAENAFALMSASKAWNLGGLKAALAIAGREAAADLARMPEEVGHGPSHLGVIAHTAAFRTGGNWLDALLRGLDHNRTLLGALVDEHLPGVQYRWPQGTYLAWLDCRELGFDDAASDEMTEGLAVVSDLSGPARWFLDHARVALSSGHVFGIGGAGHVRINFATSRAILIEAVSRMSRSLLERR.

Lys237 carries the post-translational modification N6-(pyridoxal phosphate)lysine.

It belongs to the class-II pyridoxal-phosphate-dependent aminotransferase family. MalY/PatB cystathionine beta-lyase subfamily. Pyridoxal 5'-phosphate is required as a cofactor.

The catalysed reaction is L,L-cystathionine + H2O = L-homocysteine + pyruvate + NH4(+). It carries out the reaction an S-substituted L-cysteine + H2O = a thiol + pyruvate + NH4(+). Its pathway is amino-acid biosynthesis; L-methionine biosynthesis via de novo pathway; L-homocysteine from L-cystathionine: step 1/1. This Mycobacterium tuberculosis (strain CDC 1551 / Oshkosh) protein is Putative cystathionine beta-lyase.